A 288-amino-acid polypeptide reads, in one-letter code: Diaminopimelate epimerase (288 aa).

Substrate-binding residues include Asn14 and Asn67. Cys76 serves as the catalytic Proton donor. Substrate is bound by residues 77-78, Asn166, Asn199, and 217-218; these read GN and ER. Catalysis depends on Cys226, which acts as the Proton acceptor. Position 227–228 (227–228) interacts with substrate; the sequence is GT.

Belongs to the diaminopimelate epimerase family. In terms of assembly, homodimer.

It is found in the cytoplasm. The enzyme catalyses (2S,6S)-2,6-diaminopimelate = meso-2,6-diaminopimelate. It participates in amino-acid biosynthesis; L-lysine biosynthesis via DAP pathway; DL-2,6-diaminopimelate from LL-2,6-diaminopimelate: step 1/1. Its function is as follows. Catalyzes the stereoinversion of LL-2,6-diaminopimelate (L,L-DAP) to meso-diaminopimelate (meso-DAP), a precursor of L-lysine and an essential component of the bacterial peptidoglycan. The sequence is that of Diaminopimelate epimerase from Bacillus thuringiensis (strain Al Hakam).